We begin with the raw amino-acid sequence, 302 residues long: 4-hydroxy-tetrahydrodipicolinate synthase (302 aa).

T55 provides a ligand contact to pyruvate. Y144 functions as the Proton donor/acceptor in the catalytic mechanism. K172 (schiff-base intermediate with substrate) is an active-site residue. Residue V214 participates in pyruvate binding.

This sequence belongs to the DapA family. In terms of assembly, homotetramer; dimer of dimers.

It localises to the cytoplasm. The catalysed reaction is L-aspartate 4-semialdehyde + pyruvate = (2S,4S)-4-hydroxy-2,3,4,5-tetrahydrodipicolinate + H2O + H(+). It functions in the pathway amino-acid biosynthesis; L-lysine biosynthesis via DAP pathway; (S)-tetrahydrodipicolinate from L-aspartate: step 3/4. Functionally, catalyzes the condensation of (S)-aspartate-beta-semialdehyde [(S)-ASA] and pyruvate to 4-hydroxy-tetrahydrodipicolinate (HTPA). This is 4-hydroxy-tetrahydrodipicolinate synthase from Prochlorococcus marinus (strain SARG / CCMP1375 / SS120).